The chain runs to 123 residues: Small ribosomal subunit protein uS12 (123 aa).

Aspartate 89 carries the 3-methylthioaspartic acid modification.

This sequence belongs to the universal ribosomal protein uS12 family. As to quaternary structure, part of the 30S ribosomal subunit. Contacts proteins S8 and S17. May interact with IF1 in the 30S initiation complex.

With S4 and S5 plays an important role in translational accuracy. Its function is as follows. Interacts with and stabilizes bases of the 16S rRNA that are involved in tRNA selection in the A site and with the mRNA backbone. Located at the interface of the 30S and 50S subunits, it traverses the body of the 30S subunit contacting proteins on the other side and probably holding the rRNA structure together. The combined cluster of proteins S8, S12 and S17 appears to hold together the shoulder and platform of the 30S subunit. This chain is Small ribosomal subunit protein uS12, found in Afipia carboxidovorans (strain ATCC 49405 / DSM 1227 / KCTC 32145 / OM5) (Oligotropha carboxidovorans).